A 192-amino-acid chain; its full sequence is Type-4 uracil-DNA glycosylase (192 aa).

Residues Cys18 and Cys21 each coordinate [4Fe-4S] cluster. Uracil contacts are provided by residues 45-47 (GEG), Phe59, and Asn85. 2 residues coordinate [4Fe-4S] cluster: Cys89 and Cys105. His161 contributes to the uracil binding site.

It belongs to the uracil-DNA glycosylase (UDG) superfamily. Type 4 (UDGa) family.

The catalysed reaction is Hydrolyzes single-stranded DNA or mismatched double-stranded DNA and polynucleotides, releasing free uracil.. Removes uracil bases that are present in DNA as a result of either deamination of cytosine or misincorporation of dUMP instead of dTMP. Can remove uracil from double-stranded DNA containing either a U/G or U/A base pair as well as from single-stranded DNA. This Thermotoga maritima (strain ATCC 43589 / DSM 3109 / JCM 10099 / NBRC 100826 / MSB8) protein is Type-4 uracil-DNA glycosylase.